Consider the following 741-residue polypeptide: NUT family member 2G (741 aa).

Disordered regions lie at residues 172-200 (PGNA…PDDS), 293-375 (IQKS…PEEI), 391-424 (LGSH…SDPG), 496-624 (RAAP…LPGM), and 638-741 (RLSQ…HCSQ). Residues 304–321 (SLPPPAPPRLEPRGPPAP) are compositionally biased toward pro residues. Residues 402–412 (EGQREKGKVEQ) show a composition bias toward basic and acidic residues. Positions 528 to 545 (QRVSVETSPPQTAAQDPQ) are enriched in polar residues. Residues 639–650 (LSQSPVPSSGLL) show a composition bias toward low complexity. The segment covering 731 to 741 (SRRKKKRHCSQ) has biased composition (basic residues).

Belongs to the NUT family.

This chain is NUT family member 2G (NUTM2G), found in Homo sapiens (Human).